A 108-amino-acid polypeptide reads, in one-letter code: Large ribosomal subunit protein uL23 (108 aa).

The protein belongs to the universal ribosomal protein uL23 family. As to quaternary structure, part of the 50S ribosomal subunit. Contacts protein L29, and trigger factor when it is bound to the ribosome.

In terms of biological role, one of the early assembly proteins it binds 23S rRNA. One of the proteins that surrounds the polypeptide exit tunnel on the outside of the ribosome. Forms the main docking site for trigger factor binding to the ribosome. This chain is Large ribosomal subunit protein uL23, found in Albidiferax ferrireducens (strain ATCC BAA-621 / DSM 15236 / T118) (Rhodoferax ferrireducens).